The chain runs to 132 residues: MVKIRLTRLGRHKLPFFRIVVIDSRARRDGAYIEKVGTYEPFEGVVNINEEIALSWLKKGAQPSDTVKNLLREQGVWKKFMDSKVQSKKEHNANKVKKEVKKPEAKKAAASKPASKPSASKSASQKKTVSKK.

Over residues 82–107 the composition is skewed to basic and acidic residues; that stretch reads DSKVQSKKEHNANKVKKEVKKPEAKK. The segment at 82 to 132 is disordered; that stretch reads DSKVQSKKEHNANKVKKEVKKPEAKKAAASKPASKPSASKSASQKKTVSKK. Residues 108-132 show a composition bias toward low complexity; sequence AAASKPASKPSASKSASQKKTVSKK.

The protein belongs to the bacterial ribosomal protein bS16 family.

The chain is Small ribosomal subunit protein bS16 from Malacoplasma penetrans (strain HF-2) (Mycoplasma penetrans).